A 305-amino-acid chain; its full sequence is MATAAYLNSPSLQQRLIGYARVSTEDQLNDAQVDELRAAGCHRIHQEHGSGASRARPVLAKLLKDLAMGDVLVVVRLDRLARSVSHLLDVIEDLEKRGVHFRSLRDPIDTSTPHGMFSLQVLGAVAQLERALIAERTKSGMQAAKARGRLAGNPGLRERRPEAIRAVSAARERAYLDELIVSAQTWLPTVRRLRPRHSWDNVVRILNRRGHDWTVERLRRAVHRLVREKLAEPELLARSLRRPPEDHLMRLVAGIAIADPNLSLRDIAAQLDQMQERPPRGGRKWQPSSVRALLDEASRIGLVRA.

The 134-residue stretch at 15-148 folds into the Resolvase/invertase-type recombinase catalytic domain; that stretch reads RLIGYARVST…SGMQAAKARG (134 aa). Ser-23 (O-(5'-phospho-DNA)-serine intermediate) is an active-site residue.

The protein belongs to the site-specific recombinase resolvase family.

The polypeptide is Probable DNA-invertase y4cG (Sinorhizobium fredii (strain NBRC 101917 / NGR234)).